The sequence spans 177 residues: Probable DNA-directed RNA polymerase subunit delta (177 aa).

An HTH HARE-type domain is found at 14-81 (CSMIEVVHSV…GENRWGLRSW (68 aa)). A disordered region spans residues 90-177 (EILPQPKPKK…ETEEEEEEEL (88 aa)). Acidic residues predominate over residues 106 to 177 (DGFDDYIEED…ETEEEEEEEL (72 aa)).

This sequence belongs to the RpoE family. As to quaternary structure, RNAP is composed of a core of 2 alpha, a beta and a beta' subunits. The core is associated with a delta subunit and one of several sigma factors.

Its function is as follows. Participates in both the initiation and recycling phases of transcription. In the presence of the delta subunit, RNAP displays an increased specificity of transcription, a decreased affinity for nucleic acids, and an increased efficiency of RNA synthesis because of enhanced recycling. The protein is Probable DNA-directed RNA polymerase subunit delta of Bacillus cereus (strain B4264).